Here is a 462-residue protein sequence, read N- to C-terminus: NADH-quinone oxidoreductase subunit N (462 aa).

13 consecutive transmembrane segments (helical) span residues 15–35, 42–62, 80–100, 113–133, 161–181, 204–224, 239–259, 267–287, 295–315, 323–343, 366–386, 396–416, and 441–461; these read LSYPFLFLITTAIVLLLCSGF, FYIGISSLSLIVSAFLILNNA, IVSFYASLVILCFSFLYLLMQ, LFMIASLLLMVSSSNLVLIFI, YFSIAAVGAGFFVMAVAFIYL, LLGAGVMIFVLCAIKLSLAPF, LVAFISVVPKVAMLVVVIRLF, FEYIIIVLAIFSMLIGAFAAL, MFAYSSVVHSSLVLIACIPLL, ILLAIFGYWTLFAFANYAVFM, IAFCLSISVLSLAGIPPFGVF, VILNGYWYLALFVALSSVIML, and FIQNFILAFCVCVSIFAILLM.

This sequence belongs to the complex I subunit 2 family. In terms of assembly, NDH-1 is composed of 14 different subunits. Subunits NuoA, H, J, K, L, M, N constitute the membrane sector of the complex.

Its subcellular location is the cell inner membrane. It catalyses the reaction a quinone + NADH + 5 H(+)(in) = a quinol + NAD(+) + 4 H(+)(out). NDH-1 shuttles electrons from NADH, via FMN and iron-sulfur (Fe-S) centers, to quinones in the respiratory chain. The immediate electron acceptor for the enzyme in this species is believed to be ubiquinone. Couples the redox reaction to proton translocation (for every two electrons transferred, four hydrogen ions are translocated across the cytoplasmic membrane), and thus conserves the redox energy in a proton gradient. This chain is NADH-quinone oxidoreductase subunit N, found in Campylobacter jejuni (strain RM1221).